A 288-amino-acid polypeptide reads, in one-letter code: Polyamine aminopropyltransferase (288 aa).

Residues 9 to 242 enclose the PABS domain; the sequence is SGWLDEYHQG…GLWSWAFASM (234 aa). Gln-36 is an S-methyl-5'-thioadenosine binding site. Residues His-67 and Asp-91 each contribute to the spermidine site. S-methyl-5'-thioadenosine is bound by residues Glu-111 and 143 to 144; that span reads NG. Asp-162 (proton acceptor) is an active-site residue. Pro-169 contacts S-methyl-5'-thioadenosine.

This sequence belongs to the spermidine/spermine synthase family. Homodimer or homotetramer.

The protein resides in the cytoplasm. It carries out the reaction S-adenosyl 3-(methylsulfanyl)propylamine + putrescine = S-methyl-5'-thioadenosine + spermidine + H(+). It functions in the pathway amine and polyamine biosynthesis; spermidine biosynthesis; spermidine from putrescine: step 1/1. Catalyzes the irreversible transfer of a propylamine group from the amino donor S-adenosylmethioninamine (decarboxy-AdoMet) to putrescine (1,4-diaminobutane) to yield spermidine. The protein is Polyamine aminopropyltransferase of Prochlorococcus marinus (strain NATL1A).